Here is a 555-residue protein sequence, read N- to C-terminus: Solute carrier family 22 member 2 (555 aa).

Residues 1–22 lie on the Cytoplasmic side of the membrane; it reads MPTTVDDVLEHGGEFHFFQKQM. A helical transmembrane segment spans residues 23-43; the sequence is FFLLALLSATFAPIYVGIVFL. At 44–150 the chain is on the extracellular side; the sequence is GFTPDHRCRS…LVCANSWMLD (107 aa). A glycan (N-linked (GlcNAc...) asparagine) is linked at N72. A helical membrane pass occupies residues 151–171; it reads LFQSSVNVGFFIGSMSIGYIA. The Cytoplasmic portion of the chain corresponds to 172-177; that stretch reads DRFGRK. The chain crosses the membrane as a helical span at residues 178–198; it reads LCLLTTVLINAAAGVLMAISP. Over 199 to 208 the chain is Extracellular; the sequence is TYTWMLIFRL. Residues 209–229 form a helical membrane-spanning segment; the sequence is IQGLVSKAGWLIGYILITEFV. At 230-238 the chain is on the cytoplasmic side; that stretch reads GRRYRRTVG. A helical membrane pass occupies residues 239–259; that stretch reads IFYQVAYTVGLLVLAGVAYAL. The Extracellular portion of the chain corresponds to 260–263; that stretch reads PHWR. The chain crosses the membrane as a helical span at residues 264–284; it reads WLQFTVSLPNFFFLLYYWCIP. Positions 284–288 match the Proline-rich sequence motif; it reads PESPR. At 285 to 348 the chain is on the cytoplasmic side; sequence ESPRWLISQN…VRTPQIRKHT (64 aa). Residues 349–369 traverse the membrane as a helical segment; it reads MILMYNWFTSSVLYQGLIMHM. Residues 370–375 lie on the Extracellular side of the membrane; sequence GLAGDN. Residues 376-396 traverse the membrane as a helical segment; sequence IYLDFFYSALVEFPAAFMIIL. The Cytoplasmic portion of the chain corresponds to 397 to 414; that stretch reads TIDRIGRRYPWAASNMVA. The helical transmembrane segment at 415-435 threads the bilayer; that stretch reads GAACLASVFIPGDLQWLKIII. The Extracellular segment spans residues 436–441; that stretch reads SCLGRM. Residues 442–462 traverse the membrane as a helical segment; sequence GITMAYEIVCLVNAELYPTFI. At 463–464 the chain is on the cytoplasmic side; the sequence is RN. The chain crosses the membrane as a helical span at residues 465–485; that stretch reads LGVHICSSMCDIGGIITPFLV. Residues 486-494 are Extracellular-facing; that stretch reads YRLTNIWLE. A helical transmembrane segment spans residues 495 to 515; it reads LPLMVFGVLGLVAGGLVLLLP. At 516-555 the chain is on the cytoplasmic side; that stretch reads ETKGKALPETIEEAENMQRPRKNKEKMIYLQVQKLDIPLN.

Belongs to the major facilitator (TC 2.A.1) superfamily. Organic cation transporter (TC 2.A.1.19) family. In terms of processing, tyrosine phosphorylated by tyrosine-protein kinase YES1. As to expression, mainly expressed in kidney, in the cortex and medulla. Localized in testis, mostly to peritubular myoid cells and Leydig cells and also detected along the basal membrane of Sertoli cells. Expressed in brain, in neurons of the cerebral cortex and in various subcortical nuclei. In the brain, also detected in the dopaminergic regions of the substantia nigra. Expressed in tracheal and bronchial ciliated epithelium in the respiratory tract. Also detected in secretory phase endometrium, in scattered stromal cells. Expressed in spleen, placenta, small intestine and spinal cord. Weakly expressed in prostate, uterus and lung. Mainly expressed in kidney, bone marrow and testis. Expressed in colon, skeletal muscle, spinal cord, placenta and liver.

It localises to the basolateral cell membrane. It is found in the basal cell membrane. Its subcellular location is the apical cell membrane. It catalyses the reaction (R)-noradrenaline(out) = (R)-noradrenaline(in). The enzyme catalyses (R)-adrenaline(out) = (R)-adrenaline(in). The catalysed reaction is serotonin(out) = serotonin(in). It carries out the reaction dopamine(out) = dopamine(in). It catalyses the reaction histamine(out) = histamine(in). The enzyme catalyses thiamine(in) = thiamine(out). The catalysed reaction is creatinine(in) = creatinine(out). It carries out the reaction 1-methylnicotinamide(out) = 1-methylnicotinamide(in). It catalyses the reaction guanidine(out) = guanidine(in). The enzyme catalyses choline(out) = choline(in). The catalysed reaction is agmatine(out) = agmatine(in). It carries out the reaction putrescine(out) = putrescine(in). It catalyses the reaction spermidine(in) = spermidine(out). The enzyme catalyses tyramine(in) = tyramine(out). The catalysed reaction is L-histidyl-L-proline diketopiperazine(in) = L-histidyl-L-proline diketopiperazine(out). It carries out the reaction (R)-salsolinol(in) = (R)-salsolinol(out). It catalyses the reaction N-methyl-(R)-salsolinol(in) = N-methyl-(R)-salsolinol(out). The enzyme catalyses acetylcholine(in) = acetylcholine(out). The catalysed reaction is prostaglandin F2alpha(out) = prostaglandin F2alpha(in). It carries out the reaction prostaglandin E2(out) = prostaglandin E2(in). Its activity is regulated as follows. Tyrosine phosphorylation of the transporter leads to activation of the transport activity. TEA uptake is activated by tyrosine phosphorylation. Inhibited by cGMP, most likely through a cGMP-binding protein that interacts with OCT2. Electrogenic voltage-dependent transporter that mediates the transport of a variety of organic cations such as endogenous bioactive amines, cationic drugs and xenobiotics. Functions as a Na(+)-independent, bidirectional uniporter. Cation cellular uptake or release is driven by the electrochemical potential, i.e. membrane potential and concentration gradient. However, may also engage electroneutral cation exchange when saturating concentrations of cation substrates are reached. Predominantly expressed at the basolateral membrane of hepatocytes and proximal tubules and involved in the uptake and disposition of cationic compounds by hepatic and renal clearance from the blood flow. Implicated in monoamine neurotransmitters uptake such as histamine, dopamine, adrenaline/epinephrine, noradrenaline/norepinephrine, serotonin and tyramine, thereby supporting a physiological role in the central nervous system by regulating interstitial concentrations of neurotransmitters. Also capable of transporting dopaminergic neuromodulators cyclo(his-pro), salsolinol and N-methyl-salsolinol, thereby involved in the maintenance of dopaminergic cell integrity in the central nervous system. Mediates the bidirectional transport of acetylcholine (ACh) at the apical membrane of ciliated cell in airway epithelium, thereby playing a role in luminal release of ACh from bronchial epithelium. Also transports guanidine and endogenous monoamines such as vitamin B1/thiamine, creatinine and N-1-methylnicotinamide (NMN). Mediates the uptake and efflux of quaternary ammonium compound choline. Mediates the bidirectional transport of polyamine agmatine and the uptake of polyamines putrescine and spermidine. Able to transport non-amine endogenous compounds such as prostaglandin E2 (PGE2) and prostaglandin F2-alpha (PGF2-alpha). Also involved in the uptake of xenobiotic 4-(4-(dimethylamino)styryl)-N-methylpyridinium (ASP). May contribute to regulate the transport of organic compounds in testis across the blood-testis-barrier. In terms of biological role, in contrast with isoform 1, not able to transport guanidine, creatinine, cimetidine and metformin. In Homo sapiens (Human), this protein is Solute carrier family 22 member 2.